Reading from the N-terminus, the 171-residue chain is Peptide deformylase (171 aa).

Fe cation contacts are provided by C92 and H134. E135 is an active-site residue. H138 provides a ligand contact to Fe cation.

Belongs to the polypeptide deformylase family. Fe(2+) is required as a cofactor.

It carries out the reaction N-terminal N-formyl-L-methionyl-[peptide] + H2O = N-terminal L-methionyl-[peptide] + formate. Removes the formyl group from the N-terminal Met of newly synthesized proteins. Requires at least a dipeptide for an efficient rate of reaction. N-terminal L-methionine is a prerequisite for activity but the enzyme has broad specificity at other positions. This is Peptide deformylase from Polynucleobacter necessarius subsp. necessarius (strain STIR1).